The following is a 392-amino-acid chain: Esterase EstB (392 aa).

Ser-75 acts as the Acyl-ester intermediate in catalysis.

This sequence belongs to the class-A beta-lactamase family.

It is found in the cytoplasm. Its activity is regulated as follows. Strongly inhibited by eserin, NaF, HgCl2, SDS and Triton X-100. Its function is as follows. Acts on short-chain (C4-C6) fatty acid esters and triglycerides, including tertiary alcohol esters. Activity on p-nitrophenyl esters is generally higher than on o-nitrophenyl esters. Lacks beta-lactamase activity; it hydrolyzes the ester bond of cephalosporin substrates but there is no opening of the beta-lactam ring observed. The protein is Esterase EstB (estB) of Burkholderia gladioli (Pseudomonas marginata).